The following is a 347-amino-acid chain: DNA-directed RNA polymerase subunit alpha (347 aa).

The segment at 1-226 (MLISQRPTLS…ELFGLARELN (226 aa)) is alpha N-terminal domain (alpha-NTD). The tract at residues 241–347 (ADHIASFALP…DQDYAETEQL (107 aa)) is alpha C-terminal domain (alpha-CTD).

Belongs to the RNA polymerase alpha chain family. Homodimer. The RNAP catalytic core consists of 2 alpha, 1 beta, 1 beta' and 1 omega subunit. When a sigma factor is associated with the core the holoenzyme is formed, which can initiate transcription.

It carries out the reaction RNA(n) + a ribonucleoside 5'-triphosphate = RNA(n+1) + diphosphate. DNA-dependent RNA polymerase catalyzes the transcription of DNA into RNA using the four ribonucleoside triphosphates as substrates. This is DNA-directed RNA polymerase subunit alpha from Mycobacterium ulcerans (strain Agy99).